The primary structure comprises 335 residues: tRNA N6-adenosine threonylcarbamoyltransferase (335 aa).

Positions 111 and 115 each coordinate Fe cation. Residues 133-137 (LISGG), D166, G179, and N276 each bind substrate. D301 serves as a coordination point for Fe cation.

The protein belongs to the KAE1 / TsaD family. Requires Fe(2+) as cofactor.

It localises to the cytoplasm. It catalyses the reaction L-threonylcarbamoyladenylate + adenosine(37) in tRNA = N(6)-L-threonylcarbamoyladenosine(37) in tRNA + AMP + H(+). In terms of biological role, required for the formation of a threonylcarbamoyl group on adenosine at position 37 (t(6)A37) in tRNAs that read codons beginning with adenine. Is involved in the transfer of the threonylcarbamoyl moiety of threonylcarbamoyl-AMP (TC-AMP) to the N6 group of A37, together with TsaE and TsaB. TsaD likely plays a direct catalytic role in this reaction. This chain is tRNA N6-adenosine threonylcarbamoyltransferase, found in Wolbachia sp. subsp. Drosophila simulans (strain wRi).